We begin with the raw amino-acid sequence, 139 residues long: Small ribosomal subunit protein uS12 (139 aa).

D102 is subject to 3-methylthioaspartic acid.

The protein belongs to the universal ribosomal protein uS12 family. Part of the 30S ribosomal subunit. Contacts proteins S8 and S17. May interact with IF1 in the 30S initiation complex.

In terms of biological role, with S4 and S5 plays an important role in translational accuracy. Interacts with and stabilizes bases of the 16S rRNA that are involved in tRNA selection in the A site and with the mRNA backbone. Located at the interface of the 30S and 50S subunits, it traverses the body of the 30S subunit contacting proteins on the other side and probably holding the rRNA structure together. The combined cluster of proteins S8, S12 and S17 appears to hold together the shoulder and platform of the 30S subunit. In Mycoplasma capricolum subsp. capricolum (strain California kid / ATCC 27343 / NCTC 10154), this protein is Small ribosomal subunit protein uS12.